Reading from the N-terminus, the 155-residue chain is UPF0178 protein Clos_2709 (155 aa).

It belongs to the UPF0178 family.

This is UPF0178 protein Clos_2709 from Alkaliphilus oremlandii (strain OhILAs) (Clostridium oremlandii (strain OhILAs)).